We begin with the raw amino-acid sequence, 359 residues long: S-adenosylmethionine:tRNA ribosyltransferase-isomerase (359 aa).

Belongs to the QueA family. In terms of assembly, monomer.

Its subcellular location is the cytoplasm. It catalyses the reaction 7-aminomethyl-7-carbaguanosine(34) in tRNA + S-adenosyl-L-methionine = epoxyqueuosine(34) in tRNA + adenine + L-methionine + 2 H(+). The protein operates within tRNA modification; tRNA-queuosine biosynthesis. Transfers and isomerizes the ribose moiety from AdoMet to the 7-aminomethyl group of 7-deazaguanine (preQ1-tRNA) to give epoxyqueuosine (oQ-tRNA). This Ralstonia pickettii (strain 12J) protein is S-adenosylmethionine:tRNA ribosyltransferase-isomerase.